Reading from the N-terminus, the 184-residue chain is UPF0398 protein BC_1561 (184 aa).

This sequence belongs to the UPF0398 family.

This chain is UPF0398 protein BC_1561, found in Bacillus cereus (strain ATCC 14579 / DSM 31 / CCUG 7414 / JCM 2152 / NBRC 15305 / NCIMB 9373 / NCTC 2599 / NRRL B-3711).